The following is a 121-amino-acid chain: Cell division protein FtsB (121 aa).

The Cytoplasmic segment spans residues 1-6; that stretch reads MRNWRW. Residues 7-24 form a helical membrane-spanning segment; the sequence is LLLVLAVLLAWLQYRFWF. The Periplasmic segment spans residues 25 to 121; the sequence is GPGNSGEVMM…PASTDPVDHP (97 aa). Positions 31–66 form a coiled coil; sequence EVMMLEAQVAHQTQDNEGLRQRNQALAAEVKDLKDG. Residues 94-121 form a disordered region; it reads APLPAPASPETAAPAQQAPASTDPVDHP. Over residues 101–121 the composition is skewed to low complexity; the sequence is SPETAAPAQQAPASTDPVDHP.

The protein belongs to the FtsB family. In terms of assembly, part of a complex composed of FtsB, FtsL and FtsQ.

The protein localises to the cell inner membrane. Functionally, essential cell division protein. May link together the upstream cell division proteins, which are predominantly cytoplasmic, with the downstream cell division proteins, which are predominantly periplasmic. This chain is Cell division protein FtsB, found in Xanthomonas oryzae pv. oryzae (strain MAFF 311018).